The sequence spans 452 residues: Bone morphogenetic protein 5 (452 aa).

The first 25 residues, 1 to 25 (MHWTVFLLRGIVGFLWSGWVQVGYA), serve as a signal peptide directing secretion. Positions 26 to 314 (KGGLGDNHVH…ASEVLLRSVR (289 aa)) are excised as a propeptide. N-linked (GlcNAc...) asparagine glycans are attached at residues Asn-209, Asn-325, Asn-343, and Asn-393. The disordered stretch occupies residues 316–345 (ASKRKNQNRNKSNSHQDPSRMPSAGDYNTS). Disulfide bonds link Cys-351–Cys-417, Cys-380–Cys-449, and Cys-384–Cys-451.

It belongs to the TGF-beta family. As to quaternary structure, interacts with ERFE; the interaction inhibits BMP-induced transcription of HAMP.

It localises to the secreted. Growth factor of the TGF-beta superfamily that plays essential roles in many developmental processes, including cartilage and bone formation or neurogenesis. Initiates the canonical BMP signaling cascade by associating with type I receptor BMPR1A and type II receptor BMPR2. In turn, BMPR1A propagates signal by phosphorylating SMAD1/5/8 that travel to the nucleus and act as activators and repressors of transcription of target genes. Can also signal through non-canonical pathway such as MAPK p38 signaling cascade to promote chondrogenic differentiation. Promotes the expression of HAMP, this is repressed by its interaction with ERFE. In Mus musculus (Mouse), this protein is Bone morphogenetic protein 5 (Bmp5).